The sequence spans 301 residues: Glucose-1-phosphate adenylyltransferase large subunit (301 aa).

The protein belongs to the bacterial/plant glucose-1-phosphate adenylyltransferase family. In terms of assembly, heterotetramer.

Its subcellular location is the plastid. The protein resides in the chloroplast. It localises to the amyloplast. It carries out the reaction alpha-D-glucose 1-phosphate + ATP + H(+) = ADP-alpha-D-glucose + diphosphate. The protein operates within glycan biosynthesis; starch biosynthesis. With respect to regulation, insensitive to 3'phosphoglycerate and orthophosphate. This protein plays a role in synthesis of starch. It catalyzes the synthesis of the activated glycosyl donor, ADP-glucose from Glc-1-P and ATP. The chain is Glucose-1-phosphate adenylyltransferase large subunit (AGA.1) from Triticum aestivum (Wheat).